We begin with the raw amino-acid sequence, 136 residues long: Translation initiation factor 5A (136 aa).

Lysine 37 carries the post-translational modification Hypusine.

This sequence belongs to the eIF-5A family.

Its subcellular location is the cytoplasm. Functions by promoting the formation of the first peptide bond. This is Translation initiation factor 5A (eIF5A) from Thermococcus onnurineus (strain NA1).